The sequence spans 176 residues: Dual-action ribosomal maturation protein DarP (176 aa).

The span at 1–10 shows a compositional bias: polar residues; sequence MTVPNHQQDI. Positions 1–22 are disordered; sequence MTVPNHQQDISDSDLESRPSKT.

This sequence belongs to the DarP family.

It localises to the cytoplasm. Its function is as follows. Member of a network of 50S ribosomal subunit biogenesis factors which assembles along the 30S-50S interface, preventing incorrect 23S rRNA structures from forming. Promotes peptidyl transferase center (PTC) maturation. This chain is Dual-action ribosomal maturation protein DarP, found in Nitrosomonas eutropha (strain DSM 101675 / C91 / Nm57).